Reading from the N-terminus, the 348-residue chain is Alternative squalene epoxidase (348 aa).

A compositionally biased stretch (basic and acidic residues) spans 1 to 10 (MLVDRVENNE). A disordered region spans residues 1 to 26 (MLVDRVENNEKQQQQMASSSDAMSDS). A compositionally biased stretch (low complexity) spans 12–26 (QQQQMASSSDAMSDS). 3 helical membrane-spanning segments follow: residues 55–75 (AIAWSGALVWPLMLTVPLLLS), 105–125 (LGLVLGILAVAVGQVFVWIFF), and 153–173 (GLLTHIGQPEGFVLLIGYLAI). The Fatty acid hydroxylase domain maps to 197 to 332 (FMCLVLQDGI…FMWFDQLGGT (136 aa)). Residues 211 to 215 (HVLEH) carry the Histidine box-1 motif. Residues 226–230 (HKPHH) carry the Histidine box-2 motif. The next 2 membrane-spanning stretches (helical) occupy residues 243 to 263 (GSLMDTFCMIIIPLFVTANLV) and 277 to 297 (SYACWLTLIHSEYVFPWDGIF). A Histidine box-3 motif is present at residues 308-312 (HHVHH).

This sequence belongs to the sterol desaturase family. Interacts with cytochrome b5/PHATRDRAFT_30770. The cofactor is Fe cation.

The protein localises to the endoplasmic reticulum membrane. The catalysed reaction is squalene + 2 Fe(II)-[cytochrome b5] + O2 + 2 H(+) = (S)-2,3-epoxysqualene + 2 Fe(III)-[cytochrome b5] + H2O. It participates in terpene metabolism; lanosterol biosynthesis; lanosterol from farnesyl diphosphate. The activity of this enzyme is not inhibited by terbinafine, an established inhibitor of the conventional flavoprotein squalene epoxidase. Functionally, catalyzes the stereospecific epoxidation of squalene at the terminal double bond to form (S)-2,3-epoxysqualene, the first oxygenation step in sterol biosynthesis. This Phaeodactylum tricornutum (strain CCAP 1055/1) protein is Alternative squalene epoxidase.